The following is a 257-amino-acid chain: Diaminopimelate epimerase (257 aa).

2 residues coordinate substrate: Asn6 and Asn57. The active-site Proton donor is Cys66. Substrate-binding positions include 67–68, Asn170, and 188–189; these read GN and ER. Cys198 (proton acceptor) is an active-site residue. 199–200 contributes to the substrate binding site; the sequence is GT.

It belongs to the diaminopimelate epimerase family. Homodimer.

The protein resides in the cytoplasm. The catalysed reaction is (2S,6S)-2,6-diaminopimelate = meso-2,6-diaminopimelate. The protein operates within amino-acid biosynthesis; L-lysine biosynthesis via DAP pathway; DL-2,6-diaminopimelate from LL-2,6-diaminopimelate: step 1/1. Its function is as follows. Catalyzes the stereoinversion of LL-2,6-diaminopimelate (L,L-DAP) to meso-diaminopimelate (meso-DAP), a precursor of L-lysine and an essential component of the bacterial peptidoglycan. The chain is Diaminopimelate epimerase from Chlorobaculum tepidum (strain ATCC 49652 / DSM 12025 / NBRC 103806 / TLS) (Chlorobium tepidum).